The chain runs to 449 residues: Tripartite motif-containing protein 64B (449 aa).

Residues 15-56 (CCICVNYFIDPVTIDCGHSFCRPCLCLCSEEGRAPMRCPSCR) form an RING-type zinc finger. Residues 87 to 128 (SSDNICVLHEETKELFCEADKRLLCGPCSESPEHMAHSHSPI) form a B box-type zinc finger. The Zn(2+) site is built by C92, H95, C114, and H120. Residues 189–225 (LDEEEQRHLQALEREAEELFQQLQDSQVRMTQHLERM) adopt a coiled-coil conformation. The B30.2/SPRY domain maps to 268–449 (ELTSWCITGV…LRPFFCFGCT (182 aa)).

It belongs to the TRIM/RBCC family.

The sequence is that of Tripartite motif-containing protein 64B (TRIM64B) from Homo sapiens (Human).